The chain runs to 214 residues: CASP-like protein 0U1 (214 aa).

Residues 1–82 are Cytoplasmic-facing; it reads MATSEAPLLK…GFTSFYQFKG (82 aa). A helical membrane pass occupies residues 83-103; it reads VVGVYAAFWVYTVLLIGLYLF. Topologically, residues 104–112 are extracellular; sequence SRGPPPGTE. Residues 113–133 form a helical membrane-spanning segment; the sequence is FVVHALFTLCMIAFVSLSVIS. Residues 134-153 lie on the Cytoplasmic side of the membrane; that stretch reads CTSTVIESDYSVCKNAAYAK. The helical transmembrane segment at 154–174 threads the bilayer; that stretch reads ASLVFAALVVVLNCATCAFVF. Residues 175–214 are Extracellular-facing; it reads KQWRSLQFVGMPENFRPFGRHRHKHGHHAGDADDAIPTHP. The interval 194–214 is disordered; the sequence is RHRHKHGHHAGDADDAIPTHP.

It belongs to the Casparian strip membrane proteins (CASP) family. In terms of assembly, homodimer and heterodimers.

The protein localises to the cell membrane. This Ostreococcus tauri protein is CASP-like protein 0U1.